A 59-amino-acid polypeptide reads, in one-letter code: UPF0434 protein HDEF_0234 (59 aa).

The protein belongs to the UPF0434 family.

This Hamiltonella defensa subsp. Acyrthosiphon pisum (strain 5AT) protein is UPF0434 protein HDEF_0234.